We begin with the raw amino-acid sequence, 197 residues long: ATP-dependent Clp protease proteolytic subunit (197 aa).

The active-site Nucleophile is Ser98. His123 is an active-site residue.

This sequence belongs to the peptidase S14 family. In terms of assembly, fourteen ClpP subunits assemble into 2 heptameric rings which stack back to back to give a disk-like structure with a central cavity, resembling the structure of eukaryotic proteasomes.

It is found in the cytoplasm. It catalyses the reaction Hydrolysis of proteins to small peptides in the presence of ATP and magnesium. alpha-casein is the usual test substrate. In the absence of ATP, only oligopeptides shorter than five residues are hydrolyzed (such as succinyl-Leu-Tyr-|-NHMec, and Leu-Tyr-Leu-|-Tyr-Trp, in which cleavage of the -Tyr-|-Leu- and -Tyr-|-Trp bonds also occurs).. Functionally, cleaves peptides in various proteins in a process that requires ATP hydrolysis. Has a chymotrypsin-like activity. Plays a major role in the degradation of misfolded proteins. In Lysinibacillus sphaericus (strain C3-41), this protein is ATP-dependent Clp protease proteolytic subunit.